We begin with the raw amino-acid sequence, 34 residues long: Toxin Ptu1 (34 aa).

Cystine bridges form between C5-C20, C12-C26, and C19-C33.

Its subcellular location is the secreted. Functionally, binds reversibly and blocks N-type voltage-gated calcium channels (Cav). In Peirates turpis (Assassin bug), this protein is Toxin Ptu1.